A 210-amino-acid chain; its full sequence is N-(5'-phosphoribosyl)anthranilate isomerase (210 aa).

Belongs to the TrpF family.

The catalysed reaction is N-(5-phospho-beta-D-ribosyl)anthranilate = 1-(2-carboxyphenylamino)-1-deoxy-D-ribulose 5-phosphate. Its pathway is amino-acid biosynthesis; L-tryptophan biosynthesis; L-tryptophan from chorismate: step 3/5. The chain is N-(5'-phosphoribosyl)anthranilate isomerase from Methanococcus aeolicus (strain ATCC BAA-1280 / DSM 17508 / OCM 812 / Nankai-3).